We begin with the raw amino-acid sequence, 946 residues long: Protein TMA108 (946 aa).

An N-acetylserine modification is found at Ser-2. 293-297 is a substrate binding site; that stretch reads MAMEN. His-330 contributes to the Zn(2+) binding site. Residue Glu-331 is the Proton acceptor of the active site. 2 residues coordinate Zn(2+): His-334 and Glu-353.

It belongs to the peptidase M1 family. As to quaternary structure, associates with ribosomal complexes. Zn(2+) is required as a cofactor.

The protein resides in the cytoplasm. Putative zinc aminopeptidase which may be involved in ribosome biogenesis. This chain is Protein TMA108 (TMA108), found in Saccharomyces cerevisiae (strain ATCC 204508 / S288c) (Baker's yeast).